Reading from the N-terminus, the 430-residue chain is MISVYSISLGCPKNRVDTEHLLGSLGVAVQPVEHLSRADVVLINTCGFILPAVEESVRTIVETIDDLSGLRKRPLLAVAGCLVGRYGAKELASELPEVDVWLPNQDITAWPAMLAHALKLEGAVTPGRLLSTGPSYAWLKISDGCRHNCSFCTIPSIRGGHRSTPADVLEREARDLVAQGVRELVLVAQDVTAWGEDIGAPHGLATLLERLLPVPGLARLRLMYLYPAGLTRELLGFMRDAGAPLVPYFDVPLQHAHPDILSRMGRPFARDPRRVVERVRDFFPDAALRTSLIVGFPGETDEHYAALTSFVEETRFTHMGVFAYRAEEGTPAAEMPEQVEDRVKEWRRDALMEVQAEISEELLAVHEGTRQQVLVDAPHEEWPGLHTGRTWFQAPEIDGITYVSGPGVEPGALVEADIVETRTYDLVALA.

In terms of domain architecture, MTTase N-terminal spans 2–119; sequence ISVYSISLGC…WPAMLAHALK (118 aa). 6 residues coordinate [4Fe-4S] cluster: Cys11, Cys46, Cys81, Cys145, Cys149, and Cys152. Residues 131 to 361 enclose the Radical SAM core domain; that stretch reads STGPSYAWLK…MEVQAEISEE (231 aa). Residues 364–430 enclose the TRAM domain; it reads AVHEGTRQQV…TRTYDLVALA (67 aa).

Belongs to the methylthiotransferase family. RimO subfamily. [4Fe-4S] cluster is required as a cofactor.

The protein localises to the cytoplasm. The catalysed reaction is L-aspartate(89)-[ribosomal protein uS12]-hydrogen + (sulfur carrier)-SH + AH2 + 2 S-adenosyl-L-methionine = 3-methylsulfanyl-L-aspartate(89)-[ribosomal protein uS12]-hydrogen + (sulfur carrier)-H + 5'-deoxyadenosine + L-methionine + A + S-adenosyl-L-homocysteine + 2 H(+). Catalyzes the methylthiolation of an aspartic acid residue of ribosomal protein uS12. In Nitratidesulfovibrio vulgaris (strain ATCC 29579 / DSM 644 / CCUG 34227 / NCIMB 8303 / VKM B-1760 / Hildenborough) (Desulfovibrio vulgaris), this protein is Ribosomal protein uS12 methylthiotransferase RimO.